The sequence spans 449 residues: Chitobiosyldiphosphodolichol beta-mannosyltransferase (449 aa).

The Lumenal portion of the chain corresponds to M1 to R7. A helical membrane pass occupies residues W8 to P28. The short motif at L21–Y32 is the Dolichol recognition element. At Y29–T104 the chain is on the cytoplasmic side. The segment at residues S105–W125 is an intramembrane region (helical). Topologically, residues E126–H449 are cytoplasmic. Positions Q435–H449 are required for oligomerization.

The protein belongs to the glycosyltransferase group 1 family. Glycosyltransferase 33 subfamily. In terms of assembly, homodimer. ALG1 forms mannosyltransferases (MT) heteromeric complexes with either ALG2 or ALG11.

The protein localises to the endoplasmic reticulum membrane. The catalysed reaction is an N,N'-diacetylchitobiosyl-diphospho-di-trans,poly-cis-dolichol + GDP-alpha-D-mannose = a beta-D-Man-(1-&gt;4)-beta-D-GlcNAc-(1-&gt;4)-alpha-D-GlcNAc-diphospho-di-trans,poly-cis-dolichol + GDP + H(+). It participates in protein modification; protein glycosylation. Participates in the formation of the lipid-linked precursor oligosaccharide for N-glycosylation. Involved in assembling the dolichol-pyrophosphate-GlcNAc(2)-Man(5) intermediate on the cytoplasmic surface of the ER. The protein is Chitobiosyldiphosphodolichol beta-mannosyltransferase (ALG1) of Saccharomyces cerevisiae (strain ATCC 204508 / S288c) (Baker's yeast).